The following is a 348-amino-acid chain: Lysophosphatidic acid receptor 2 (348 aa).

At 1–30 (MGHCYYNETIGFFYNNSGKELSSHWRPKDV) the chain is on the extracellular side. N-linked (GlcNAc...) asparagine glycosylation is found at asparagine 7 and asparagine 15. A helical membrane pass occupies residues 31 to 51 (VVVALGLTVSVLVLLTNLLVI). The Cytoplasmic segment spans residues 52-66 (AAIASNRRFHQPIYY). A helical membrane pass occupies residues 67–87 (LLGNLAAADLFAGVAYLFLMF). The Extracellular portion of the chain corresponds to 88-104 (HTGPRTARLSLEGWFLR). The chain crosses the membrane as a helical span at residues 105–124 (QGLLDTSLTASVATLLAIAV). Residues 125 to 143 (ERRRSVMAVQLHSRLPRGR) lie on the Cytoplasmic side of the membrane. The helical transmembrane segment at 144 to 164 (VVMLIVGVWVAALGLGLLPAH) threads the bilayer. Topologically, residues 165-185 (SWHCLCALDRCSRMAPLLSRS) are extracellular. Residues 186–206 (YLAVWALSSLLVFLLMVAVYT) traverse the membrane as a helical segment. At 207-239 (RIFFYVRRRVQRMAEHVSCHPRYRETTLSLVKT) the chain is on the cytoplasmic side. Residues 240–260 (VVIILGAFVVCWTPGQVVLLL) traverse the membrane as a helical segment. The Extracellular portion of the chain corresponds to 261–276 (DGLGCKSCNVLAVEKY). A helical membrane pass occupies residues 277–294 (FLLLAEANSLVNAAVYSC). At 295–348 (RDAEMRRTFRRLLCCACLRRSTRESAHYTSSAQGGASTRIMLPENGHPLMDSTL) the chain is on the cytoplasmic side. The S-palmitoyl cysteine moiety is linked to residue cysteine 308. The PDZ-binding motif lies at 345 to 348 (DSTL).

This sequence belongs to the G-protein coupled receptor 1 family. Interacts with SLC9A3R2/NHERF2, MAGI3 and PLCB3. Interacts with RALA and GRK2.

Its subcellular location is the cell surface. The protein resides in the cell membrane. In terms of biological role, receptor for lysophosphatidic acid (LPA), a mediator of diverse cellular activities. Seems to be coupled to the G(i)/G(o), G(12)/G(13), and G(q) families of heteromeric G proteins. Plays a key role in phospholipase C-beta (PLC-beta) signaling pathway. Stimulates phospholipase C (PLC) activity in a manner that is independent of RALA activation. In Macaca fascicularis (Crab-eating macaque), this protein is Lysophosphatidic acid receptor 2.